Here is a 1105-residue protein sequence, read N- to C-terminus: MSDNRPTYDTSSSDEEPSNHFHIQLPQRQLNLQEIRKQNHKKHEKPTIAKQTASNLAKAKKITTGSNHKFGNSINNNNNNANKHLGSSSAGTNRRSLISPTSSTHVSSDDDDDDDDNAAFYGDKLNDNKKLNVFADTKNNLSHFQFNADGIKPKSLHGQGDDSSDDDGNNLDEVEDETHSDFAVLNQNHPPQQYYETDSSDEDEEDDDEVPQTVHKTYSNASSGRSSRLSRKKSMSETTDTRAPIPPTGRRSTNSNHSRESSGRRSTSSGNINSGGGLKGILRKMSLVDSTPVDSTNQDISHSDTFLGRVLNFGTNQGLSGGGLAPGASRVIREEDEGEWNLDEERRVGFAAHENDRDAFEMQPLNYEDLSEEAKQLIQQHVPGAGASNLDHSQQSSAAPSTEITPSQSPNQHLLNEKSNNNENNQQSTTVESSSSTSSPGEDEELARRRASEERKKAENPFYTPNPDLFLRGTNADNQELHQAPNDFLHDMDGDYIAPPKQVQAGVLSSLLRLYQNPQEQKSASSLSRVSTGTSGTALSSFDDSYDSDDYKDSKSSSNVDLQHKLKSGIKGGSKAMFNKAANKLKHHSHTRTNTVETQGSSNSEEFSNDKDEFSNGYDDDNKMNANLPSFQNARPKMPKKKTTEPVQKLKKLRHKQRAERLRITVHIADILQRQRFIMNMCRALMLFGAPTHRLEEYMVMTSRVLEIDGQFIYFPGCMLVSFGDAATRTSEVHLVRCAQGINLSKLADTHKIYKAVIHDLIGVEDASKKLDDLLKSKSRYPPWLCVLFYGLGSLAVTPFAFEGGWLDLPISFGVGLCVGYLQFYVSSISNLYSSVFEVSAAIVVAFIARGIGSIKGGDLFCFSAIAQGSLAIILPGYIILCGSLELQSRNLVAGAVRMFYAVIYSLFLGFGITLGAALYGWIDHNATSANSCASGHAIDEKWRILFVPMFALCLGLINQARWSQVPIMIVIAGIGYIGSFFAGKHFSTVTEFTACIGAFIVGVLGNLYSRIWKGMAVSAMLPAIFVQVPSGIASKSSLISGLNTADQITNKSSSNNGGTVTNDASSLSFGATMVEVSIGISVGLFAAALIIYPFGKKRTGLFAL.

Residues M1 to S11 are compositionally biased toward polar residues. Disordered stretches follow at residues M1–H22, R36–N55, G65–D123, I151–L278, A385–G473, and E520–K656. The segment covering N67–N82 has biased composition (low complexity). The span at L85–V106 shows a compositional bias: polar residues. Over residues D162 to T178 the composition is skewed to acidic residues. The span at L185–T197 shows a compositional bias: polar residues. Positions D198–V210 are enriched in acidic residues. Positions L390–H413 are enriched in polar residues. A compositionally biased stretch (low complexity) spans E417–S439. The span at L446–E459 shows a compositional bias: basic and acidic residues. 3 stretches are compositionally biased toward polar residues: residues E520–L539, R592–E606, and M624–N633. A run of 10 helical transmembrane segments spans residues P782–F802, L809–I829, S835–I855, L860–I880, V903–I923, A938–I958, W963–A983, H986–G1006, G1015–S1035, and V1075–F1095.

Belongs to the ThrE exporter (TC 2.A.79) family.

The protein localises to the membrane. In Candida albicans (strain SC5314 / ATCC MYA-2876) (Yeast), this protein is Pheromone-regulated membrane protein 10 (PRM10).